The chain runs to 479 residues: Glycogen synthase (479 aa).

ADP-alpha-D-glucose is bound at residue Lys-15.

This sequence belongs to the glycosyltransferase 1 family. Bacterial/plant glycogen synthase subfamily.

It catalyses the reaction [(1-&gt;4)-alpha-D-glucosyl](n) + ADP-alpha-D-glucose = [(1-&gt;4)-alpha-D-glucosyl](n+1) + ADP + H(+). It functions in the pathway glycan biosynthesis; glycogen biosynthesis. Functionally, synthesizes alpha-1,4-glucan chains using ADP-glucose. This Acidiphilium cryptum (strain JF-5) protein is Glycogen synthase.